The primary structure comprises 360 residues: 3-dehydroquinate synthase (360 aa).

NAD(+)-binding positions include 71–76, 105–109, 129–130, Lys142, and Lys151; these read DGEAHK, GVVGD, and TT. Zn(2+)-binding residues include Glu184, His247, and His264.

It belongs to the sugar phosphate cyclases superfamily. Dehydroquinate synthase family. Co(2+) serves as cofactor. The cofactor is Zn(2+). Requires NAD(+) as cofactor.

The protein resides in the cytoplasm. The enzyme catalyses 7-phospho-2-dehydro-3-deoxy-D-arabino-heptonate = 3-dehydroquinate + phosphate. The protein operates within metabolic intermediate biosynthesis; chorismate biosynthesis; chorismate from D-erythrose 4-phosphate and phosphoenolpyruvate: step 2/7. In terms of biological role, catalyzes the conversion of 3-deoxy-D-arabino-heptulosonate 7-phosphate (DAHP) to dehydroquinate (DHQ). The sequence is that of 3-dehydroquinate synthase from Azoarcus sp. (strain BH72).